We begin with the raw amino-acid sequence, 360 residues long: D-alanine--D-alanine ligase (360 aa).

Positions 146-352 constitute an ATP-grasp domain; that stretch reads KLCVADAGIA…FPELAERLLQ (207 aa). 179–234 provides a ligand contact to ATP; it reads EEKFIYPFFVKPANLGSSIGISKVHHREQLPAALKSACSLDSKIVVEKAITGREIE. 3 residues coordinate Mg(2+): Asp305, Glu319, and Asn321.

The protein belongs to the D-alanine--D-alanine ligase family. Requires Mg(2+) as cofactor. Mn(2+) is required as a cofactor.

The protein localises to the cytoplasm. It carries out the reaction 2 D-alanine + ATP = D-alanyl-D-alanine + ADP + phosphate + H(+). It participates in cell wall biogenesis; peptidoglycan biosynthesis. Its function is as follows. Cell wall formation. The polypeptide is D-alanine--D-alanine ligase (Pelodictyon phaeoclathratiforme (strain DSM 5477 / BU-1)).